A 277-amino-acid polypeptide reads, in one-letter code: Shikimate dehydrogenase (NADP(+)) (277 aa).

Shikimate contacts are provided by residues 15-17 (SLS) and T62. The active-site Proton acceptor is the K66. Residues N87 and D102 each coordinate shikimate. NADP(+)-binding positions include 127–131 (GAGGA), 151–156 (NRTVDK), and I219. Y221 contributes to the shikimate binding site. Residue G242 participates in NADP(+) binding.

This sequence belongs to the shikimate dehydrogenase family. As to quaternary structure, homodimer.

The enzyme catalyses shikimate + NADP(+) = 3-dehydroshikimate + NADPH + H(+). Its pathway is metabolic intermediate biosynthesis; chorismate biosynthesis; chorismate from D-erythrose 4-phosphate and phosphoenolpyruvate: step 4/7. Involved in the biosynthesis of the chorismate, which leads to the biosynthesis of aromatic amino acids. Catalyzes the reversible NADPH linked reduction of 3-dehydroshikimate (DHSA) to yield shikimate (SA). The sequence is that of Shikimate dehydrogenase (NADP(+)) from Bacillus cereus (strain ATCC 10987 / NRS 248).